A 490-amino-acid chain; its full sequence is Zinc finger protein STP4 (490 aa).

Composition is skewed to low complexity over residues 1–16 and 52–73; these read MLVSSSFASSIDSVMS and PSLPLLSSTTSSSRSTLSSTLN. The tract at residues 1–85 is disordered; the sequence is MLVSSSFASS…PPPPLTTSYS (85 aa). 2 positions are modified to phosphoserine: Ser-153 and Ser-155. The segment covering 231–247 has biased composition (low complexity); that stretch reads QQQQQLNSSSSASALPS. The tract at residues 231 to 273 is disordered; that stretch reads QQQQQLNSSSSASALPSIHSPLTNEHTSRYSSSLKDSAKITKQ. Polar residues predominate over residues 250-265; sequence SPLTNEHTSRYSSSLK. A C2H2-type zinc finger spans residues 304–326; that stretch reads HKCPICQRGFARNNDLIRHKKRH. Residues 338-375 are disordered; sequence ESDNNSGADDQDDTARTSANNDSDDSNDKLAASSSSEE.

It is found in the cytoplasm. It localises to the mitochondrion. The protein resides in the nucleus. This chain is Zinc finger protein STP4 (STP4), found in Saccharomyces cerevisiae (strain ATCC 204508 / S288c) (Baker's yeast).